Here is a 270-residue protein sequence, read N- to C-terminus: Ethanolamine ammonia-lyase small subunit (270 aa).

Residues Val-166, Glu-187, and Cys-216 each contribute to the adenosylcob(III)alamin site.

It belongs to the EutC family. The basic unit is a heterodimer which dimerizes to form tetramers. The heterotetramers trimerize; 6 large subunits form a core ring with 6 small subunits projecting outwards. Requires adenosylcob(III)alamin as cofactor.

It localises to the bacterial microcompartment. The enzyme catalyses ethanolamine = acetaldehyde + NH4(+). It functions in the pathway amine and polyamine degradation; ethanolamine degradation. Functionally, catalyzes the deamination of various vicinal amino-alcohols to oxo compounds. Allows this organism to utilize ethanolamine as the sole source of nitrogen and carbon in the presence of external vitamin B12. The sequence is that of Ethanolamine ammonia-lyase small subunit from Ralstonia nicotianae (strain ATCC BAA-1114 / GMI1000) (Ralstonia solanacearum).